Here is a 364-residue protein sequence, read N- to C-terminus: Peptide chain release factor 1 (364 aa).

Gln-232 is subject to N5-methylglutamine.

This sequence belongs to the prokaryotic/mitochondrial release factor family. In terms of processing, methylated by PrmC. Methylation increases the termination efficiency of RF1.

It is found in the cytoplasm. Peptide chain release factor 1 directs the termination of translation in response to the peptide chain termination codons UAG and UAA. The protein is Peptide chain release factor 1 of Sorangium cellulosum (strain So ce56) (Polyangium cellulosum (strain So ce56)).